Consider the following 352-residue polypeptide: B1 bradykinin receptor (352 aa).

The Extracellular portion of the chain corresponds to 1–41 (MASWPPLELQSSNQSQLFPQNATACDNAPEAWDLLHRVLPT). 2 N-linked (GlcNAc...) asparagine glycosylation sites follow: Asn13 and Asn21. The chain crosses the membrane as a helical span at residues 42 to 62 (FIISICSFGLLGNLFVLLVFL). Residues 63–72 (LPRRRLNVAE) lie on the Cytoplasmic side of the membrane. Residues 73 to 93 (IYLANLAASDLVFVLGLPFWA) form a helical membrane-spanning segment. Residues 94–110 (ENIWNQFNWPFGALLCR) lie on the Extracellular side of the membrane. Cysteines 109 and 188 form a disulfide. Residues 111-131 (VINGIIKANLFISIFLVVAIS) traverse the membrane as a helical segment. At 132-153 (QDRYCVLVHPMASRRRQRRRQA) the chain is on the cytoplasmic side. A helical transmembrane segment spans residues 154–174 (RVTCVLIWVVGGLLSIPTFLL). Residues 175-206 (RSIQAVPDLNITACILLLPHEAWHFARIVELN) lie on the Extracellular side of the membrane. Residue Asn184 is glycosylated (N-linked (GlcNAc...) asparagine). Residues 207 to 227 (ILAFLLPLAAIIFFNYHILAS) traverse the membrane as a helical segment. The Cytoplasmic segment spans residues 228–250 (LRGREEVSRTRCGGSKDSKTTAL). A helical transmembrane segment spans residues 251 to 271 (ILTLVVAFLVCWAPYHFFAFL). The Extracellular segment spans residues 272 to 294 (EFLFQVQAVRGCFWEDFIDLGLQ). The helical transmembrane segment at 295–315 (LANFLAFTNSSLNPVIYVFVG) threads the bilayer. Residues 316-352 (RLFRTKVWELYKQCTPKSLAPISSSHRKEIFQLFWRN) lie on the Cytoplasmic side of the membrane. A lipid anchor (S-palmitoyl cysteine) is attached at Cys329.

It belongs to the G-protein coupled receptor 1 family. Bradykinin receptor subfamily. BDKRB1 sub-subfamily.

The protein localises to the cell membrane. This is a receptor for bradykinin. Could be a factor in chronic pain and inflammation. This is B1 bradykinin receptor (BDKRB1) from Macaca mulatta (Rhesus macaque).